We begin with the raw amino-acid sequence, 412 residues long: Multifunctional CCA protein (412 aa).

Residues G8 and R11 each contribute to the ATP site. Positions 8 and 11 each coordinate CTP. Residues D21 and D23 each contribute to the Mg(2+) site. Residues R91, R137, and R140 each contribute to the ATP site. CTP is bound by residues R91, R137, and R140. The 102-residue stretch at T225 to Y326 folds into the HD domain.

It belongs to the tRNA nucleotidyltransferase/poly(A) polymerase family. Bacterial CCA-adding enzyme type 1 subfamily. Monomer. Can also form homodimers and oligomers. It depends on Mg(2+) as a cofactor. Ni(2+) serves as cofactor.

The enzyme catalyses a tRNA precursor + 2 CTP + ATP = a tRNA with a 3' CCA end + 3 diphosphate. It catalyses the reaction a tRNA with a 3' CCA end + 2 CTP + ATP = a tRNA with a 3' CCACCA end + 3 diphosphate. Catalyzes the addition and repair of the essential 3'-terminal CCA sequence in tRNAs without using a nucleic acid template. Adds these three nucleotides in the order of C, C, and A to the tRNA nucleotide-73, using CTP and ATP as substrates and producing inorganic pyrophosphate. tRNA 3'-terminal CCA addition is required both for tRNA processing and repair. Also involved in tRNA surveillance by mediating tandem CCA addition to generate a CCACCA at the 3' terminus of unstable tRNAs. While stable tRNAs receive only 3'-terminal CCA, unstable tRNAs are marked with CCACCA and rapidly degraded. In Nitrosomonas eutropha (strain DSM 101675 / C91 / Nm57), this protein is Multifunctional CCA protein.